We begin with the raw amino-acid sequence, 452 residues long: Pup--protein ligase (452 aa).

Position 9 (E9) interacts with Mg(2+). R53 is a binding site for ATP. Y55 is a binding site for Mg(2+). D57 (proton acceptor) is an active-site residue. A Mg(2+)-binding site is contributed by E63. ATP is bound by residues T66 and W419.

Belongs to the Pup ligase/Pup deamidase family. Pup-conjugating enzyme subfamily.

It catalyses the reaction ATP + [prokaryotic ubiquitin-like protein]-L-glutamate + [protein]-L-lysine = ADP + phosphate + N(6)-([prokaryotic ubiquitin-like protein]-gamma-L-glutamyl)-[protein]-L-lysine.. It functions in the pathway protein degradation; proteasomal Pup-dependent pathway. Its pathway is protein modification; protein pupylation. Catalyzes the covalent attachment of the prokaryotic ubiquitin-like protein modifier Pup to the proteasomal substrate proteins, thereby targeting them for proteasomal degradation. This tagging system is termed pupylation. The ligation reaction involves the side-chain carboxylate of the C-terminal glutamate of Pup and the side-chain amino group of a substrate lysine. This chain is Pup--protein ligase, found in Salinispora tropica (strain ATCC BAA-916 / DSM 44818 / JCM 13857 / NBRC 105044 / CNB-440).